We begin with the raw amino-acid sequence, 887 residues long: Putative RNA-binding protein 15B (887 aa).

Residues 1 to 132 (MKRQSERDSS…EPAGPGSTAA (132 aa)) form a disordered region. Low complexity predominate over residues 10 to 20 (SPSGRGSSSSA). 2 stretches are compositionally biased toward basic and acidic residues: residues 22–34 (RPRE…EAGG) and 65–77 (GHRD…DANH). A compositionally biased stretch (gly residues) spans 83-94 (RSSGAPGGGGRT). The segment covering 95 to 110 (GKASGDPGAGGASPRA) has biased composition (low complexity). 2 positions are modified to phosphoserine: Ser107 and Ser111. The segment covering 111–122 (SPLPPPPPPPGA) has biased composition (pro residues). The segment covering 123–132 (EPAGPGSTAA) has biased composition (low complexity). In terms of domain architecture, RRM 1 spans 136–216 (KTLLISSLSP…RPLKVEPVYL (81 aa)). Lys210 is covalently cross-linked (Glycyl lysine isopeptide (Lys-Gly) (interchain with G-Cter in SUMO2)). The interval 215 to 249 (YLRGGGSSRRSSSSSAAASTPPPGPPAPADPLGYL) is disordered. The span at 222–233 (SRRSSSSSAAAS) shows a compositional bias: low complexity. The segment covering 234 to 243 (TPPPGPPAPA) has biased composition (pro residues). Phosphoserine is present on residues Ser261 and Ser263. 2 RRM domains span residues 333–410 (RNLF…YGKA) and 414–488 (TRLW…FAKA). Thr529 is modified (phosphothreonine). Phosphoserine is present on residues Ser549, Ser553, and Ser559. The segment at 549 to 703 (SLSKSSDRRN…TLEEPKHETK (155 aa)) is disordered. Basic and acidic residues-rich tracts occupy residues 570-613 (RSGE…ERSR), 623-643 (RGSD…EGTK), and 668-700 (EAPD…EPKH). A Nuclear localization signal motif is present at residues 590 to 594 (RRKRR). A Glycyl lysine isopeptide (Lys-Gly) (interchain with G-Cter in SUMO2) cross-link involves residue Lys699. Residues 708–886 (LSEYAQTLQL…HMVIVIVRDT (179 aa)) form the SPOC domain. The segment at 719 to 887 (WNGLLVLKNS…MVIVIVRDTA (169 aa)) is interaction with Epstein-Barr virus BMLF1.

Belongs to the RRM Spen family. Component of the WMM complex, a N6-methyltransferase complex composed of a catalytic subcomplex, named MAC, and of an associated subcomplex, named MACOM. The MAC subcomplex is composed of METTL3 and METTL14. The MACOM subcomplex is composed of WTAP, ZC3H13, CBLL1/HAKAI, VIRMA, and, in some cases of RBM15 (RBM15 or RBM15B). May interact with NCOR2. Interacts with NXF1, the interaction is required to promote mRNA export.

Its subcellular location is the nucleus. It localises to the nucleoplasm. The protein resides in the nucleus speckle. The protein localises to the nucleus envelope. Its function is as follows. RNA-binding protein that acts as a key regulator of N6-methyladenosine (m6A) methylation of RNAs, thereby regulating different processes, such as alternative splicing of mRNAs and X chromosome inactivation mediated by Xist RNA. Associated component of the WMM complex, a complex that mediates N6-methyladenosine (m6A) methylation of RNAs, a modification that plays a role in the efficiency of mRNA splicing and RNA processing. Plays a key role in m6A methylation, possibly by binding target RNAs and recruiting the WMM complex. Involved in random X inactivation mediated by Xist RNA: acts by binding Xist RNA and recruiting the WMM complex, which mediates m6A methylation, leading to target YTHDC1 reader on Xist RNA and promoting transcription repression activity of Xist. Functions in the regulation of alternative or illicit splicing, possibly by regulating m6A methylation. Inhibits pre-mRNA splicing. Also functions as a mRNA export factor by acting as a cofactor for the nuclear export receptor NXF1. The chain is Putative RNA-binding protein 15B (Rbm15b) from Mus musculus (Mouse).